We begin with the raw amino-acid sequence, 373 residues long: Ribonuclease D (373 aa).

In terms of domain architecture, 3'-5' exonuclease spans 3–171 (YQLITTDAGL…MAKRLVQETE (169 aa)). Residues 210 to 289 (RPRQLGCLQK…AEAAELEESA (80 aa)) enclose the HRDC domain.

The protein belongs to the RNase D family. The cofactor is a divalent metal cation.

It localises to the cytoplasm. It carries out the reaction Exonucleolytic cleavage that removes extra residues from the 3'-terminus of tRNA to produce 5'-mononucleotides.. In terms of biological role, exonuclease involved in the 3' processing of various precursor tRNAs. Initiates hydrolysis at the 3'-terminus of an RNA molecule and releases 5'-mononucleotides. The chain is Ribonuclease D from Serratia proteamaculans (strain 568).